The sequence spans 241 residues: Probable FKBP-type peptidyl-prolyl cis-trans isomerase (241 aa).

The region spanning T150–K241 is the PPIase FKBP-type domain.

This sequence belongs to the FKBP-type PPIase family.

The catalysed reaction is [protein]-peptidylproline (omega=180) = [protein]-peptidylproline (omega=0). PPIases accelerate the folding of proteins. It catalyzes the cis-trans isomerization of proline imidic peptide bonds in oligopeptides. In Haemophilus influenzae (strain ATCC 51907 / DSM 11121 / KW20 / Rd), this protein is Probable FKBP-type peptidyl-prolyl cis-trans isomerase.